The sequence spans 334 residues: ADP-L-glycero-D-manno-heptose-6-epimerase (334 aa).

NADP(+) is bound by residues 11-12, 32-33, K39, K54, 77-81, and N94; these read FI, DN, and QGACS. Residue Y141 is the Proton acceptor of the active site. K145 contributes to the NADP(+) binding site. Residue N171 participates in substrate binding. V172 and K180 together coordinate NADP(+). The active-site Proton acceptor is K180. Substrate-binding positions include R182, H189, 203-206, R216, and Y295; that span reads FGSN.

It belongs to the NAD(P)-dependent epimerase/dehydratase family. HldD subfamily. As to quaternary structure, homopentamer. NADP(+) serves as cofactor.

It carries out the reaction ADP-D-glycero-beta-D-manno-heptose = ADP-L-glycero-beta-D-manno-heptose. Its pathway is nucleotide-sugar biosynthesis; ADP-L-glycero-beta-D-manno-heptose biosynthesis; ADP-L-glycero-beta-D-manno-heptose from D-glycero-beta-D-manno-heptose 7-phosphate: step 4/4. Catalyzes the interconversion between ADP-D-glycero-beta-D-manno-heptose and ADP-L-glycero-beta-D-manno-heptose via an epimerization at carbon 6 of the heptose. The protein is ADP-L-glycero-D-manno-heptose-6-epimerase of Neisseria gonorrhoeae (strain ATCC 700825 / FA 1090).